The chain runs to 31 residues: Cyclotide glopa C (31 aa).

The cyclopeptide (Gly-Asn) cross-link spans 1 to 31 (GDLPICGETCFEGGNCRIPGCTCVWPFCSKN). 3 cysteine pairs are disulfide-bonded: Cys-6/Cys-21, Cys-10/Cys-23, and Cys-16/Cys-28.

This is a cyclic peptide.

Functionally, probably participates in a plant defense mechanism. The chain is Cyclotide glopa C from Gloeospermum pauciflorum.